A 573-amino-acid polypeptide reads, in one-letter code: Sulfate adenylyltransferase (573 aa).

Positions 1 to 169 are N-terminal; it reads MSNPPHGGVL…LEAVNKLQHY (169 aa). Positions 170–394 are catalytic; it reads DFVDLRYSPA…LRESHPPRSQ (225 aa). Q197 provides a ligand contact to sulfate. Residues 197-200 and 291-294 contribute to the ATP site; these read QTRN and GRDH. Catalysis depends on residues T198, R199, and N200. R199 provides a ligand contact to sulfate. Residue A295 coordinates sulfate. M333 contacts ATP. An allosteric regulation domain; adenylyl-sulfate kinase-like region spans residues 395–573; it reads QGFTVLFTGY…LESQGLLDRF (179 aa). Residues 434-437, R451, 477-478, and R515 contribute to the 3'-phosphoadenylyl sulfate site; these read ENIR and IA.

The protein in the N-terminal section; belongs to the sulfate adenylyltransferase family. It in the C-terminal section; belongs to the APS kinase family. As to quaternary structure, homohexamer. Dimer of trimers.

It is found in the cytoplasm. The enzyme catalyses sulfate + ATP + H(+) = adenosine 5'-phosphosulfate + diphosphate. It functions in the pathway sulfur metabolism; hydrogen sulfide biosynthesis; sulfite from sulfate: step 1/3. Allosterically inhibited by 3'-phosphoadenosine 5'-phosphosulfate (PAPS). Catalyzes the first intracellular reaction of sulfate assimilation, forming adenosine-5'-phosphosulfate (APS) from inorganic sulfate and ATP. Plays an important role in sulfate activation as a component of the biosynthesis pathway of sulfur-containing amino acids. The polypeptide is Sulfate adenylyltransferase (cys-11) (Neurospora crassa (strain ATCC 24698 / 74-OR23-1A / CBS 708.71 / DSM 1257 / FGSC 987)).